The chain runs to 38 residues: Photosystem II reaction center protein L (38 aa).

Residues 17-37 (SLYWGLLLIFVLAILFSSYIF) form a helical membrane-spanning segment.

This sequence belongs to the PsbL family. In terms of assembly, PSII is composed of 1 copy each of membrane proteins PsbA, PsbB, PsbC, PsbD, PsbE, PsbF, PsbH, PsbI, PsbJ, PsbK, PsbL, PsbM, PsbT, PsbX, PsbY, PsbZ, Psb30/Ycf12, at least 3 peripheral proteins of the oxygen-evolving complex and a large number of cofactors. It forms dimeric complexes.

The protein localises to the plastid. The protein resides in the chloroplast thylakoid membrane. In terms of biological role, one of the components of the core complex of photosystem II (PSII). PSII is a light-driven water:plastoquinone oxidoreductase that uses light energy to abstract electrons from H(2)O, generating O(2) and a proton gradient subsequently used for ATP formation. It consists of a core antenna complex that captures photons, and an electron transfer chain that converts photonic excitation into a charge separation. This subunit is found at the monomer-monomer interface and is required for correct PSII assembly and/or dimerization. The chain is Photosystem II reaction center protein L from Nephroselmis olivacea (Green alga).